We begin with the raw amino-acid sequence, 291 residues long: Flavonol synthase/flavanone 3-hydroxylase (291 aa).

One can recognise a Fe2OG dioxygenase domain in the interval 151-250 (CWYVMNINHY…RMSWPVLVSP (100 aa)). The Fe cation site is built by His-175, Asp-177, and His-231.

The protein belongs to the iron/ascorbate-dependent oxidoreductase family. It depends on L-ascorbate as a cofactor. The cofactor is Fe cation.

Its subcellular location is the cytoplasm. The catalysed reaction is a (2R,3R)-dihydroflavonol + 2-oxoglutarate + O2 = a flavonol + succinate + CO2 + H2O. The enzyme catalyses a (2S)-flavan-4-one + 2-oxoglutarate + O2 = a (2R,3R)-dihydroflavonol + succinate + CO2. The protein operates within secondary metabolite biosynthesis; flavonoid biosynthesis. In terms of biological role, catalyzes the formation of flavonols from dihydroflavonols. It can act on dihydrokaempferol to produce kaempferol, on dihydroquercetin to produce quercitin and on dihydromyricetin to produce myricetin. The sequence is that of Flavonol synthase/flavanone 3-hydroxylase from Matthiola incana (Common stock).